Here is a 227-residue protein sequence, read N- to C-terminus: Ras-related protein Rab-3C (227 aa).

Residues serine 39, glycine 42, lysine 43, threonine 44, serine 45, threonine 56, serine 57, serine 61, and threonine 62 each contribute to the GTP site. Position 44 (threonine 44) interacts with Mg(2+). The Switch 1 signature appears at 53-66 (DSFTSAFVSTVGID). Threonine 62 and aspartate 85 together coordinate Mg(2+). Threonine 86 carries the phosphothreonine modification. The short motif at 86-104 (TAGQERYRTITTAYYRGAM) is the Switch 2 element. GTP-binding residues include glycine 88, asparagine 143, lysine 144, aspartate 146, alanine 174, and lysine 175. Phosphoserine occurs at positions 196 and 198. Threonine 206 carries the post-translational modification Phosphothreonine. Residues cysteine 225 and cysteine 227 are each lipidated (S-geranylgeranyl cysteine). Cysteine methyl ester is present on cysteine 227.

This sequence belongs to the small GTPase superfamily. Rab family. As to quaternary structure, interacts with RIMS1, RIMS2, RPH3A and RPH3AL. The GTP-bound form interacts with REP15. Interacts with GDI2, CHM and CHML; phosphorylation at Thr-86 disrupts these interactions. Interacts with MADD (via uDENN domain); the GTP-bound form is preferred for interaction. The cofactor is Mg(2+). In terms of processing, phosphorylation of Thr-86 in the switch II region by LRRK2 prevents the association of RAB regulatory proteins, including CHM, CHML and RAB GDP dissociation inhibitor GDI2.

Its subcellular location is the cell membrane. The enzyme catalyses GTP + H2O = GDP + phosphate + H(+). With respect to regulation, regulated by guanine nucleotide exchange factors (GEFs) which promote the exchange of bound GDP for free GTP. Regulated by GTPase activating proteins (GAPs) which increase the GTP hydrolysis activity. Inhibited by GDP dissociation inhibitors (GDIs) which prevent Rab-GDP dissociation. Its function is as follows. The small GTPases Rab are key regulators of intracellular membrane trafficking, from the formation of transport vesicles to their fusion with membranes. Rabs cycle between an inactive GDP-bound form and an active GTP-bound form that is able to recruit to membranes different sets of downstream effectors directly responsible for vesicle formation, movement, tethering and fusion. This Bos taurus (Bovine) protein is Ras-related protein Rab-3C (RAB3C).